The following is a 514-amino-acid chain: Ras-GEF domain-containing family member 1B-A (514 aa).

In terms of domain architecture, N-terminal Ras-GEF spans 76–206 (HDNNLISGSL…MTQTLIRKLT (131 aa)). Positions 246 to 494 (DPFTLAQQLT…YLASYESEGP (249 aa)) constitute a Ras-GEF domain.

As to expression, detected in oocytes, and in embryos at 4 to 120 hours post-fertilization (hpf). Detected along marginal blastomeres at early epiboly stage and throughout the margin at the onset of gastrulation. At 60% epiboly, strongest expression is found in the dorsal shield region and is restricted to the epiblast. Detected in the anterior border of the presomitic mesoderm at the end of epiboly. Detected in adaxial cells, in the somites and in the nervous system during somitogenesis. Detected in diencephalon and hindbrain and in cells surrounding the notochord, including adaxial cells and ventral mesendoderm, in 15-somite stage embryos. At 48 hpf, detected mainly in the brain.

Guanine nucleotide exchange factor (GEF) for Ras family proteins (in vitro). The sequence is that of Ras-GEF domain-containing family member 1B-A (rasgef1ba) from Danio rerio (Zebrafish).